Reading from the N-terminus, the 117-residue chain is Fluoride-specific ion channel FluC 2 (117 aa).

2 consecutive transmembrane segments (helical) span residues 1–21 (MISI…RSAI) and 46–66 (FLIG…AFFV). Na(+)-binding residues include Gly-71 and Thr-74. Residues 95–115 (LFLNYSLLQFIIGFIACYIGY) traverse the membrane as a helical segment.

Belongs to the fluoride channel Fluc/FEX (TC 1.A.43) family.

Its subcellular location is the cell membrane. The enzyme catalyses fluoride(in) = fluoride(out). Its activity is regulated as follows. Na(+) is not transported, but it plays an essential structural role and its presence is essential for fluoride channel function. Fluoride-specific ion channel. Important for reducing fluoride concentration in the cell, thus reducing its toxicity. The chain is Fluoride-specific ion channel FluC 2 from Staphylococcus aureus (strain MSSA476).